The following is a 243-amino-acid chain: Flavin-dependent thymidylate synthase (243 aa).

The ThyX domain maps to 2-207 (VKVKLINYTP…ELKPIIEWAK (206 aa)). Residues serine 56, 80-82 (RHR), and glutamine 88 each bind FAD. Residues 77–80 (QLVR), 88–92 (QQSQR), and arginine 146 each bind dUMP. A ThyX motif motif is present at residues 80–90 (RHRIASYTQQS). FAD is bound by residues 162–164 (NLR) and histidine 168. Position 173 (arginine 173) interacts with dUMP. Arginine 173 serves as the catalytic Involved in ionization of N3 of dUMP, leading to its activation.

The protein belongs to the thymidylate synthase ThyX family. As to quaternary structure, homotetramer. FAD is required as a cofactor.

It carries out the reaction dUMP + (6R)-5,10-methylene-5,6,7,8-tetrahydrofolate + NADPH + H(+) = dTMP + (6S)-5,6,7,8-tetrahydrofolate + NADP(+). The protein operates within pyrimidine metabolism; dTTP biosynthesis. Its function is as follows. Catalyzes the reductive methylation of 2'-deoxyuridine-5'-monophosphate (dUMP) to 2'-deoxythymidine-5'-monophosphate (dTMP) while utilizing 5,10-methylenetetrahydrofolate (mTHF) as the methyl donor, and NADPH and FADH(2) as the reductant. The chain is Flavin-dependent thymidylate synthase from Pyrococcus horikoshii (strain ATCC 700860 / DSM 12428 / JCM 9974 / NBRC 100139 / OT-3).